Here is a 536-residue protein sequence, read N- to C-terminus: SNW domain-containing protein 1 (536 aa).

Residues 1-46 (MALTSFLPAPTQLSQDQLEAEEKARSQRSRQTSLVSSRREPPPYGY) are disordered. Position 2 is an N-acetylalanine (Ala2). Ser14 bears the Phosphoserine mark. Lys23 is covalently cross-linked (Glycyl lysine isopeptide (Lys-Gly) (interchain with G-Cter in SUMO2)). The segment at 59–79 (GDGGAFPEIHVAQYPLDMGRK) is interaction with PPIL1. Glycyl lysine isopeptide (Lys-Gly) (interchain with G-Cter in SUMO2) cross-links involve residues Lys81, Lys97, Lys115, Lys122, Lys141, Lys158, and Lys170. An SNW region spans residues 174-339 (AQYIRYTPSQ…KARERRAGIK (166 aa)). Residues Ser182 and Ser190 each carry the phosphoserine modification. Lys193 is covalently cross-linked (Glycyl lysine isopeptide (Lys-Gly) (interchain with G-Cter in SUMO2)). The segment at 209 to 234 (PPRFKINKKIPRGPPSPPAPVMHSPS) is disordered. 3 positions are modified to phosphoserine: Ser224, Ser232, and Ser234. Residues Lys240, Lys258, Lys286, Lys339, Lys344, Lys416, and Lys441 each participate in a glycyl lysine isopeptide (Lys-Gly) (interchain with G-Cter in SUMO2) cross-link. The segment at 311–386 (KMAQKEKEKH…RSKLQRNENR (76 aa)) is disordered. Position 446 is a phosphoserine (Ser446). Lys452 is covalently cross-linked (Glycyl lysine isopeptide (Lys-Gly) (interchain with G-Cter in SUMO2)). 2 stretches are compositionally biased toward basic and acidic residues: residues 469–489 (TNRF…RGRE) and 503–530 (KFLE…EHEG). The tract at residues 469–536 (TNRFVPDKEF…EHEGKKRRKE (68 aa)) is disordered. Phosphoserine is present on residues Ser479 and Ser481. Lys509 participates in a covalent cross-link: Glycyl lysine isopeptide (Lys-Gly) (interchain with G-Cter in SUMO2).

Belongs to the SNW family. In terms of assembly, identified in the spliceosome C complex. Associates with U4/U6-U5 tri-small nuclear ribonucleoproteins (U4/U6-U5 tri-snRNPs). Component of the minor spliceosome, which splices U12-type introns. Interacts with SKI, SMAD2,SMAD3, RBPJ, RB1, PABPN1, MAGEA1, SIRT1, FOXN3, U2AF2, PPIL1, DAXX and ATP1B4. Interacts with VDR and RXRA; preferentially associates with VDR:RXRA heterodimers. Interacts with NCOR2. Interacts with MAML1. Interacts with NOTCH1 NICD; the interaction involves multimerized NOTCH1 NICD. Forms a complex with NOTCH1 NICD and MAML1; the association is dissociated by RBPJ. Associates with positive transcription elongation factor b (P-TEFb). Component of the SNARP complex which consists at least of SNIP1, SNW1, THRAP3, BCLAF1 and PNN.

The protein resides in the nucleus. In terms of biological role, involved in pre-mRNA splicing as component of the spliceosome. As a component of the minor spliceosome, involved in the splicing of U12-type introns in pre-mRNAs. Required in the specific splicing of CDKN1A pre-mRNA; the function probably involves the recruitment of U2AF2 to the mRNA. May recruit PPIL1 to the spliceosome. May be involved in cyclin-D1/CCND1 mRNA stability through the SNARP complex which associates with both the 3'end of the CCND1 gene and its mRNA. Involved in transcriptional regulation. Modulates TGF-beta-mediated transcription via association with SMAD proteins, MYOD1-mediated transcription via association with PABPN1, RB1-mediated transcriptional repression, and retinoid-X receptor (RXR)- and vitamin D receptor (VDR)-dependent gene transcription in a cell line-specific manner probably involving coactivators NCOA1 and GRIP1. Is involved in NOTCH1-mediated transcriptional activation. Binds to multimerized forms of Notch intracellular domain (NICD) and is proposed to recruit transcriptional coactivators such as MAML1 to form an intermediate preactivation complex which associates with DNA-bound CBF-1/RBPJ to form a transcriptional activation complex by releasing SNW1 and redundant NOTCH1 NICD. The polypeptide is SNW domain-containing protein 1 (SNW1) (Pongo abelii (Sumatran orangutan)).